The chain runs to 721 residues: Putative cullin-like protein 1 (721 aa).

The Cullin neddylation domain occupies 651 to 713 (DRRYAIDAAL…RDYLERDTEN (63 aa)).

This sequence belongs to the cullin family.

This Arabidopsis thaliana (Mouse-ear cress) protein is Putative cullin-like protein 1.